The primary structure comprises 860 residues: Spindle and centriole-associated protein 1 (860 aa).

3 disordered regions span residues 160-200 (ESVI…SQSN), 232-254 (QSQM…QKAA), and 293-330 (KQLL…SSSN). Thr-236 bears the Phosphothreonine mark. Positions 236–249 (TASSGTPSSASPSG) are enriched in low complexity. A compositionally biased stretch (polar residues) spans 308–330 (PSKQKSSMLSASTASTDLPSSSN). Positions 383 to 437 (RYLKESELQLRKEVETRQRLEEALGDHRELIDALTAEVLFLREENTATQARLQQY) form a coiled coil. Phosphoserine is present on Ser-646. Residues 729–755 (SSMEERIAELNRQSMEARGKLLQLIEQ) are a coiled coil. 3 positions are modified to phosphoserine: Ser-765, Ser-769, and Ser-824. Residues 790 to 860 (IPGAEAPESS…GWFALSTHVS (71 aa)) form a disordered region. A compositionally biased stretch (low complexity) spans 808–824 (SGLNSRRSSGAASNSCS).

In terms of assembly, interacts with CEP120.

It localises to the cytoplasm. Its subcellular location is the cytoskeleton. The protein localises to the microtubule organizing center. It is found in the centrosome. The protein resides in the centriole. It localises to the spindle. Regulator required for centriole duplication. for proper bipolar spindle formation and chromosome congression in mitosis. In Bos taurus (Bovine), this protein is Spindle and centriole-associated protein 1 (SPICE1).